A 397-amino-acid chain; its full sequence is Elongation factor Tu-1 (397 aa).

One can recognise a tr-type G domain in the interval 10–206; the sequence is KPHVNIGTIG…AVDEAIPEPE (197 aa). A G1 region spans residues 19–26; sequence GHIDHGKT. Residue 19–26 participates in GTP binding; it reads GHIDHGKT. Residue Thr26 coordinates Mg(2+). The segment at 62–66 is G2; it reads GITIS. The segment at 83–86 is G3; the sequence is DCPG. Residues 83 to 87 and 138 to 141 contribute to the GTP site; these read DCPGH and NKAD. Residues 138–141 form a G4 region; it reads NKAD. Residues 176–178 are G5; the sequence is SAL.

Belongs to the TRAFAC class translation factor GTPase superfamily. Classic translation factor GTPase family. EF-Tu/EF-1A subfamily. As to quaternary structure, monomer.

The protein localises to the cytoplasm. The catalysed reaction is GTP + H2O = GDP + phosphate + H(+). GTP hydrolase that promotes the GTP-dependent binding of aminoacyl-tRNA to the A-site of ribosomes during protein biosynthesis. The protein is Elongation factor Tu-1 of Streptomyces coelicolor (strain ATCC BAA-471 / A3(2) / M145).